We begin with the raw amino-acid sequence, 340 residues long: Ornithine carbamoyltransferase (340 aa).

Residues 57–60, Gln-84, Arg-108, and 135–138 contribute to the carbamoyl phosphate site; these read STRT and HPTQ. Residues Asn-167, Asp-231, and 235-236 contribute to the L-ornithine site; that span reads SM. Residues 272 to 273 and Arg-317 contribute to the carbamoyl phosphate site; that span reads CL.

The protein belongs to the aspartate/ornithine carbamoyltransferase superfamily. OTCase family.

It is found in the cytoplasm. The enzyme catalyses carbamoyl phosphate + L-ornithine = L-citrulline + phosphate + H(+). It functions in the pathway amino-acid biosynthesis; L-arginine biosynthesis; L-arginine from L-ornithine and carbamoyl phosphate: step 1/3. Reversibly catalyzes the transfer of the carbamoyl group from carbamoyl phosphate (CP) to the N(epsilon) atom of ornithine (ORN) to produce L-citrulline. This Lactiplantibacillus plantarum (strain ATCC BAA-793 / NCIMB 8826 / WCFS1) (Lactobacillus plantarum) protein is Ornithine carbamoyltransferase (argF).